Consider the following 610-residue polypeptide: Zinc metalloproteinase-disintegrin-like VAP1 (610 aa).

Positions 1 to 20 (MIQVLLVTISLAVFPYQGSS) are cleaved as a signal peptide. Positions 21-189 (VILESGNVND…KKASQSNLTP (169 aa)) are excised as a propeptide. Position 190 is a pyrrolidone carboxylic acid (Glu) (Glu190). The Peptidase M12B domain occupies 199 to 395 (KYVKLFLVAD…NMPQCILKKP (197 aa)). Asn218 carries N-linked (GlcNAc...) asparagine glycosylation. 3 disulfides stabilise this stretch: Cys310–Cys390, Cys350–Cys374, and Cys352–Cys357. His335 contributes to the Zn(2+) binding site. The Metal-binding motif lies at 335–346 (HEMGHNLGMDHD). Residue Glu336 is the Proton acceptor of the active site. Residues His339 and His345 each contribute to the Zn(2+) site. One can recognise a Disintegrin domain in the interval 403–488 (PAVCGNYFVE…AECTDRFQRN (86 aa)). Ca(2+) contacts are provided by Val405, Asn408, Phe410, Glu412, Glu415, and Asp418. Cystine bridges form between Cys406/Cys435, Cys417/Cys430, Cys419/Cys425, Cys429/Cys452, Cys443/Cys449, Cys448/Cys474, Cys461/Cys481, Cys468/Cys499, Cys492/Cys504, Cys511/Cys561, Cys526/Cys572, Cys539/Cys549, Cys556/Cys598, and Cys592/Cys603. Residues 467-469 (ECD) carry the D/ECD-tripeptide motif. 5 residues coordinate Ca(2+): Asp469, Met470, Asp472, Asp483, and Arg484.

This sequence belongs to the venom metalloproteinase (M12B) family. P-III subfamily. P-IIIc sub-subfamily. Homodimer; disulfide-linked. Requires Zn(2+) as cofactor. In terms of processing, the N-terminus is blocked. In terms of tissue distribution, expressed by the venom gland.

The protein resides in the secreted. Its activity is regulated as follows. Inhibited by EDTA and EGTA, but not by PMSF. Functionally, zinc metalloprotease that has fibrinogenolytic and hemorrhagic activities. It induces apoptosis in vascular endothelial cells (VEC), without degrading extracellular matrix (it cannot cleave collagen) or inhibiting adhesion of VEC. VAP1-induced apoptosis is inhibited by antibodies for integrin alpha-3, alpha-6, beta-1 and CD9. Apoptosis is accompanied by severe cell fragmentation, which is controlled by caspases. The polypeptide is Zinc metalloproteinase-disintegrin-like VAP1 (Crotalus atrox (Western diamondback rattlesnake)).